The primary structure comprises 89 residues: Large ribosomal subunit protein bL27 (89 aa).

The segment at 1–21 (MAHKKGASSSRNGRDSNAQRL) is disordered. A compositionally biased stretch (polar residues) spans 7-19 (ASSSRNGRDSNAQ).

It belongs to the bacterial ribosomal protein bL27 family.

The protein is Large ribosomal subunit protein bL27 of Frankia alni (strain DSM 45986 / CECT 9034 / ACN14a).